A 405-amino-acid chain; its full sequence is Protein NCA1 (405 aa).

The segment at 1–85 (MTTTSVCPFS…GNLNKDSTDS (85 aa)) is disordered. Basic and acidic residues-rich tracts occupy residues 13–24 (ARPDDGSTRKQG) and 37–48 (ARPDDASARKQG). Residues 76-85 (GNLNKDSTDS) are compositionally biased toward polar residues. An RING-type zinc finger spans residues 108–142 (CMLCQALLYESSRCVPCTHVFCKVCLTRFKDCPLC). TPR repeat units lie at residues 247–280 (GAVLGMLGDCSRAMGDSSSAVKHFEESVEFLMKL) and 292–325 (SVSLNKIGDLKYYDEDLQAARSYYDRALNVRRDA).

Interacts with the catalases CAT1, CAT2 and CAT3. This interaction is not induced by alkaline stress or H(2)O(2) and NaCl treatments. Expressed in roots, stems, leaves, flowers and siliques.

The protein localises to the cytoplasm. It is found in the nucleus. Has holdase chaperone activity that may fold catalase to a functional structure. Not required for the peroxisome import of catalases. Required for the activity of catalases and acts mainly at the post-transcriptional level. The sequence is that of Protein NCA1 from Arabidopsis thaliana (Mouse-ear cress).